The following is a 268-amino-acid chain: Energy-coupling factor transporter transmembrane protein EcfT (268 aa).

The next 5 helical transmembrane spans lie at 28–48 (FVFL…YLWV), 63–83 (LWFL…TLMM), 107–127 (ILEG…ATIM), 152–172 (LPVH…PTLM), and 248–268 (ISLT…YSGV).

Belongs to the energy-coupling factor EcfT family. As to quaternary structure, forms a stable energy-coupling factor (ECF) transporter complex composed of 2 membrane-embedded substrate-binding proteins (S component), 2 ATP-binding proteins (A component) and 2 transmembrane proteins (T component). May be able to interact with more than 1 S component at a time.

It is found in the cell membrane. Its function is as follows. Transmembrane (T) component of an energy-coupling factor (ECF) ABC-transporter complex. Unlike classic ABC transporters this ECF transporter provides the energy necessary to transport a number of different substrates. In Staphylococcus aureus (strain 04-02981), this protein is Energy-coupling factor transporter transmembrane protein EcfT.